The sequence spans 369 residues: Methionine import ATP-binding protein MetN 2 (369 aa).

The region spanning 33–270 (VRFIGLGKTY…PRHEVTRTLL (238 aa)) is the ABC transporter domain. ATP is bound at residue 67 to 74 (GRSGAGKS).

Belongs to the ABC transporter superfamily. Methionine importer (TC 3.A.1.24) family. The complex is composed of two ATP-binding proteins (MetN), two transmembrane proteins (MetI) and a solute-binding protein (MetQ).

It is found in the cell inner membrane. The enzyme catalyses L-methionine(out) + ATP + H2O = L-methionine(in) + ADP + phosphate + H(+). It carries out the reaction D-methionine(out) + ATP + H2O = D-methionine(in) + ADP + phosphate + H(+). In terms of biological role, part of the ABC transporter complex MetNIQ involved in methionine import. Responsible for energy coupling to the transport system. In Pseudomonas putida (strain ATCC 47054 / DSM 6125 / CFBP 8728 / NCIMB 11950 / KT2440), this protein is Methionine import ATP-binding protein MetN 2.